Consider the following 218-residue polypeptide: Probable chemoreceptor glutamine deamidase CheD (218 aa).

Belongs to the CheD family.

The catalysed reaction is L-glutaminyl-[protein] + H2O = L-glutamyl-[protein] + NH4(+). In terms of biological role, probably deamidates glutamine residues to glutamate on methyl-accepting chemotaxis receptors (MCPs), playing an important role in chemotaxis. This is Probable chemoreceptor glutamine deamidase CheD from Saccharophagus degradans (strain 2-40 / ATCC 43961 / DSM 17024).